A 317-amino-acid polypeptide reads, in one-letter code: tRNA dimethylallyltransferase (317 aa).

19–26 (GPTASGKS) contacts ATP. A substrate-binding site is contributed by 21 to 26 (TASGKS). Residues 49 to 52 (DSAQ) are interaction with substrate tRNA.

This sequence belongs to the IPP transferase family. In terms of assembly, monomer. The cofactor is Mg(2+).

It catalyses the reaction adenosine(37) in tRNA + dimethylallyl diphosphate = N(6)-dimethylallyladenosine(37) in tRNA + diphosphate. Its function is as follows. Catalyzes the transfer of a dimethylallyl group onto the adenine at position 37 in tRNAs that read codons beginning with uridine, leading to the formation of N6-(dimethylallyl)adenosine (i(6)A). The polypeptide is tRNA dimethylallyltransferase (Erythrobacter litoralis (strain HTCC2594)).